The chain runs to 451 residues: Glycine--tRNA ligase (451 aa).

Positions 101 and 151 each coordinate substrate. Residues 183–185 (RNE), 193–198 (FRTCEF), 267–268 (EL), and 312–315 (GLTR) contribute to the ATP site. Residue 198 to 202 (FEQME) coordinates substrate. Residue 308 to 312 (ETSAG) participates in substrate binding.

Belongs to the class-II aminoacyl-tRNA synthetase family. In terms of assembly, homodimer.

The protein localises to the cytoplasm. It carries out the reaction tRNA(Gly) + glycine + ATP = glycyl-tRNA(Gly) + AMP + diphosphate. Catalyzes the attachment of glycine to tRNA(Gly). The polypeptide is Glycine--tRNA ligase (Treponema denticola (strain ATCC 35405 / DSM 14222 / CIP 103919 / JCM 8153 / KCTC 15104)).